Here is a 463-residue protein sequence, read N- to C-terminus: tRNA modification GTPase MnmE (463 aa).

The (6S)-5-formyl-5,6,7,8-tetrahydrofolate site is built by Arg-26, Glu-88, and Arg-127. Residues 224–383 (GLATAIIGRP…LEQRIAKMFF (160 aa)) form the TrmE-type G domain. Asn-234 contributes to the K(+) binding site. GTP-binding positions include 234 to 239 (NVGKSS), 253 to 259 (TDVAGTT), and 278 to 281 (DTAG). Ser-238 serves as a coordination point for Mg(2+). Positions 253, 255, and 258 each coordinate K(+). Thr-259 is a binding site for Mg(2+). Position 463 (Lys-463) interacts with (6S)-5-formyl-5,6,7,8-tetrahydrofolate.

The protein belongs to the TRAFAC class TrmE-Era-EngA-EngB-Septin-like GTPase superfamily. TrmE GTPase family. In terms of assembly, homodimer. Heterotetramer of two MnmE and two MnmG subunits. K(+) is required as a cofactor.

It is found in the cytoplasm. Functionally, exhibits a very high intrinsic GTPase hydrolysis rate. Involved in the addition of a carboxymethylaminomethyl (cmnm) group at the wobble position (U34) of certain tRNAs, forming tRNA-cmnm(5)s(2)U34. The sequence is that of tRNA modification GTPase MnmE from Lactiplantibacillus plantarum (strain ATCC BAA-793 / NCIMB 8826 / WCFS1) (Lactobacillus plantarum).